The chain runs to 232 residues: Octanoyltransferase (232 aa).

The BPL/LPL catalytic domain maps to 40-226 (GSAPERVWLL…TWQDLFGSVP (187 aa)). Substrate is bound by residues 79 to 86 (RGGQWTYH), 157 to 159 (ALG), and 170 to 172 (GVA). The active-site Acyl-thioester intermediate is C188.

It belongs to the LipB family.

The protein resides in the cytoplasm. The enzyme catalyses octanoyl-[ACP] + L-lysyl-[protein] = N(6)-octanoyl-L-lysyl-[protein] + holo-[ACP] + H(+). It participates in protein modification; protein lipoylation via endogenous pathway; protein N(6)-(lipoyl)lysine from octanoyl-[acyl-carrier-protein]: step 1/2. Functionally, catalyzes the transfer of endogenously produced octanoic acid from octanoyl-acyl-carrier-protein onto the lipoyl domains of lipoate-dependent enzymes. Lipoyl-ACP can also act as a substrate although octanoyl-ACP is likely to be the physiological substrate. This Gluconacetobacter diazotrophicus (strain ATCC 49037 / DSM 5601 / CCUG 37298 / CIP 103539 / LMG 7603 / PAl5) protein is Octanoyltransferase.